Reading from the N-terminus, the 244-residue chain is MKKLWKFIPFVLMGVIYFTLTNPESAHAMHIMEGFLPVKWAVFWLIVFIPFLVLGLIRIRKLIAIDKNNKLLLALCAAFIFVLSALKIPSVTGSCSHPTGVGLATVMFGPLVVSVLGVIVLLFQALLLAHGGITTLGANAMSMAVIGPMVGFVVYKLARKLNCNKSVSIFLCAMTADLATYFTTSVQLGVVFPDPASGMMASILKFMAIFCVTQVPIAIAEGLLTVVMYNLISKNLPEKVAQLR.

The N-terminal stretch at 1-28 (MKKLWKFIPFVLMGVIYFTLTNPESAHA) is a signal peptide. Transmembrane regions (helical) follow at residues 37–57 (PVKWAVFWLIVFIPFLVLGLI), 71–91 (LLLALCAAFIFVLSALKIPSV), 103–123 (LATVMFGPLVVSVLGVIVLLF), 135–155 (TLGANAMSMAVIGPMVGFVVY), 166–186 (SVSIFLCAMTADLATYFTTSV), and 206–226 (FMAIFCVTQVPIAIAEGLLTV).

Belongs to the CbiM family. As to quaternary structure, forms an energy-coupling factor (ECF) transporter complex composed of an ATP-binding protein (A component, CbiO), a transmembrane protein (T component, CbiQ) and 2 possible substrate-capture proteins (S components, CbiM and CbiN) of unknown stoichimetry.

The protein resides in the cell membrane. It participates in cofactor biosynthesis; adenosylcobalamin biosynthesis. Its function is as follows. Part of the energy-coupling factor (ECF) transporter complex CbiMNOQ involved in cobalt import. In Listeria seeligeri serovar 1/2b (strain ATCC 35967 / DSM 20751 / CCM 3970 / CCUG 15530 / CIP 100100 / LMG 11386 / NCTC 11856 / SLCC 3954 / 1120), this protein is Cobalt transport protein CbiM.